A 418-amino-acid polypeptide reads, in one-letter code: Probable aminotransferase Rv1178 (418 aa).

The tract at residues 22 to 42 (GQGWHDRERPASGQGSGAAER) is disordered.

This sequence belongs to the class-I pyridoxal-phosphate-dependent aminotransferase family. Pyridoxal 5'-phosphate is required as a cofactor.

The polypeptide is Probable aminotransferase Rv1178 (Mycobacterium tuberculosis (strain ATCC 25618 / H37Rv)).